Here is a 105-residue protein sequence, read N- to C-terminus: Small ribosomal subunit protein uS10 (105 aa).

The protein belongs to the universal ribosomal protein uS10 family. Part of the 30S ribosomal subunit.

In terms of biological role, involved in the binding of tRNA to the ribosomes. The chain is Small ribosomal subunit protein uS10 from Lawsonia intracellularis (strain PHE/MN1-00).